We begin with the raw amino-acid sequence, 565 residues long: Sulfite reductase [NADPH] hemoprotein beta-component (565 aa).

Residues C429, C435, C474, and C478 each coordinate [4Fe-4S] cluster. C478 contributes to the siroheme binding site.

Belongs to the nitrite and sulfite reductase 4Fe-4S domain family. As to quaternary structure, alpha(8)-beta(8). The alpha component is a flavoprotein, the beta component is a hemoprotein. Requires siroheme as cofactor. [4Fe-4S] cluster serves as cofactor.

The enzyme catalyses hydrogen sulfide + 3 NADP(+) + 3 H2O = sulfite + 3 NADPH + 4 H(+). It participates in sulfur metabolism; hydrogen sulfide biosynthesis; hydrogen sulfide from sulfite (NADPH route): step 1/1. Its function is as follows. Component of the sulfite reductase complex that catalyzes the 6-electron reduction of sulfite to sulfide. This is one of several activities required for the biosynthesis of L-cysteine from sulfate. This chain is Sulfite reductase [NADPH] hemoprotein beta-component, found in Shewanella piezotolerans (strain WP3 / JCM 13877).